A 436-amino-acid polypeptide reads, in one-letter code: GTPase Obg (436 aa).

Residues 2–160 enclose the Obg domain; the sequence is SMFLDTAKIQ…RELLLELKVL (159 aa). One can recognise an OBG-type G domain in the interval 161 to 338; sequence ADVGLVGFPS…LLDATAELLD (178 aa). GTP contacts are provided by residues 167–174, 192–196, 214–217, 284–287, and 319–321; these read GFPSVGKS, FTTIV, DLPG, NKMD, and SSL. Serine 174 and threonine 194 together coordinate Mg(2+). The 79-residue stretch at 358–436 folds into the OCT domain; the sequence is GFDEEAPAFE…IGKFEFEFVD (79 aa).

It belongs to the TRAFAC class OBG-HflX-like GTPase superfamily. OBG GTPase family. In terms of assembly, monomer. Requires Mg(2+) as cofactor.

It is found in the cytoplasm. Functionally, an essential GTPase which binds GTP, GDP and possibly (p)ppGpp with moderate affinity, with high nucleotide exchange rates and a fairly low GTP hydrolysis rate. Plays a role in control of the cell cycle, stress response, ribosome biogenesis and in those bacteria that undergo differentiation, in morphogenesis control. The protein is GTPase Obg of Streptococcus sanguinis (strain SK36).